Here is a 203-residue protein sequence, read N- to C-terminus: Holliday junction branch migration complex subunit RuvA (203 aa).

The tract at residues 1–63 (MIGQLSGKVD…EEHIHLYGFL (63 aa)) is domain I. A domain II region spans residues 64 to 142 (NLEEKIFFNL…KISSGSAIIK (79 aa)). The flexible linker stretch occupies residues 143 to 149 (ESLNIKH). Residues 150 to 203 (ITPVASNEVIKALVNLGFSRFEAQNAVQGIITQNPEISIDELIKTALKNRNSNF) form a domain III region.

It belongs to the RuvA family. As to quaternary structure, homotetramer. Forms an RuvA(8)-RuvB(12)-Holliday junction (HJ) complex. HJ DNA is sandwiched between 2 RuvA tetramers; dsDNA enters through RuvA and exits via RuvB. An RuvB hexamer assembles on each DNA strand where it exits the tetramer. Each RuvB hexamer is contacted by two RuvA subunits (via domain III) on 2 adjacent RuvB subunits; this complex drives branch migration. In the full resolvosome a probable DNA-RuvA(4)-RuvB(12)-RuvC(2) complex forms which resolves the HJ.

It is found in the cytoplasm. Its function is as follows. The RuvA-RuvB-RuvC complex processes Holliday junction (HJ) DNA during genetic recombination and DNA repair, while the RuvA-RuvB complex plays an important role in the rescue of blocked DNA replication forks via replication fork reversal (RFR). RuvA specifically binds to HJ cruciform DNA, conferring on it an open structure. The RuvB hexamer acts as an ATP-dependent pump, pulling dsDNA into and through the RuvAB complex. HJ branch migration allows RuvC to scan DNA until it finds its consensus sequence, where it cleaves and resolves the cruciform DNA. This is Holliday junction branch migration complex subunit RuvA from Rickettsia africae (strain ESF-5).